The primary structure comprises 125 residues: Large ribosomal subunit protein mL51 (125 aa).

Residues 1–29 constitute a mitochondrion transit peptide; sequence MWSVQKLLWGCRSLLPQGCRSFSLGNRDL.

The protein belongs to the mitochondrion-specific ribosomal protein mL51 family. In terms of assembly, component of the mitochondrial ribosome large subunit (39S) which comprises a 16S rRNA and about 50 distinct proteins.

It localises to the mitochondrion. The chain is Large ribosomal subunit protein mL51 (mrpl51) from Xenopus laevis (African clawed frog).